The primary structure comprises 172 residues: uncharacterized protein (172 aa).

This sequence belongs to the flavoredoxin family. FMN is required as a cofactor.

This is an uncharacterized protein from Pyrococcus horikoshii (strain ATCC 700860 / DSM 12428 / JCM 9974 / NBRC 100139 / OT-3).